A 147-amino-acid polypeptide reads, in one-letter code: Protein-export protein SecB (147 aa).

Belongs to the SecB family. Homotetramer, a dimer of dimers. One homotetramer interacts with 1 SecA dimer.

It is found in the cytoplasm. Functionally, one of the proteins required for the normal export of preproteins out of the cell cytoplasm. It is a molecular chaperone that binds to a subset of precursor proteins, maintaining them in a translocation-competent state. It also specifically binds to its receptor SecA. The sequence is that of Protein-export protein SecB from Neisseria gonorrhoeae (strain ATCC 700825 / FA 1090).